Reading from the N-terminus, the 292-residue chain is Probable ABC transporter phosphonate/phosphite binding protein PhnD2 (292 aa).

The signal sequence occupies residues 1–20 (MKLKSLLSVFTISIVALTSA). Residue Cys21 is the site of N-palmitoyl cysteine attachment. Residue Cys21 is the site of S-diacylglycerol cysteine attachment.

It belongs to the phosphate/phosphite/phosphonate binding protein family. As to quaternary structure, the complex may be composed of two ATP-binding proteins (PhnC2), two transmembrane proteins (PhnE2) and a solute-binding protein (PhnD2).

The protein localises to the cell membrane. Functionally, probably part of the ABC transporter complex PhnC2D2E2. Binds strongly to methylphosphonate (MPn), ethylphosphonate (EPn) and inorganic phosphite. The sequence is that of Probable ABC transporter phosphonate/phosphite binding protein PhnD2 from Prochlorococcus marinus (strain MIT 9301).